The chain runs to 280 residues: 4-diphosphocytidyl-2-C-methyl-D-erythritol kinase (280 aa).

Lys8 is a catalytic residue. ATP is bound at residue 91–101; the sequence is PVAAGLAGGST. Asp133 is an active-site residue.

The protein belongs to the GHMP kinase family. IspE subfamily.

It catalyses the reaction 4-CDP-2-C-methyl-D-erythritol + ATP = 4-CDP-2-C-methyl-D-erythritol 2-phosphate + ADP + H(+). The protein operates within isoprenoid biosynthesis; isopentenyl diphosphate biosynthesis via DXP pathway; isopentenyl diphosphate from 1-deoxy-D-xylulose 5-phosphate: step 3/6. Functionally, catalyzes the phosphorylation of the position 2 hydroxy group of 4-diphosphocytidyl-2C-methyl-D-erythritol. This chain is 4-diphosphocytidyl-2-C-methyl-D-erythritol kinase, found in Clostridium botulinum (strain ATCC 19397 / Type A).